The sequence spans 137 residues: Ribonuclease VapC51 (137 aa).

The PINc domain occupies 5–120; sequence YLLDTSVIKR…HYDADFDLIA (116 aa). Asp-8 and Asp-95 together coordinate Mg(2+).

This sequence belongs to the PINc/VapC protein family. Requires Mg(2+) as cofactor.

Functionally, toxic component of a type II toxin-antitoxin (TA) system. An RNase. Its cognate antitoxin is VapB51. This chain is Ribonuclease VapC51, found in Mycobacterium tuberculosis (strain ATCC 25618 / H37Rv).